The sequence spans 159 residues: Transcriptional repressor NrdR (159 aa).

The span at 1 to 11 (MQCPTCQNTDS) shows a compositional bias: polar residues. The interval 1–21 (MQCPTCQNTDSRVLESRSADS) is disordered. The segment at 3–34 (CPTCQNTDSRVLESRSADSGKSVRRRRECLNC) is a zinc-finger region. An ATP-cone domain is found at 49–139 (VSVMKKDGSR…VYRKFNGVKD (91 aa)).

Belongs to the NrdR family. Zn(2+) is required as a cofactor.

Its function is as follows. Negatively regulates transcription of bacterial ribonucleotide reductase nrd genes and operons by binding to NrdR-boxes. The protein is Transcriptional repressor NrdR of Prochlorococcus marinus (strain MIT 9215).